The chain runs to 360 residues: Phospho-N-acetylmuramoyl-pentapeptide-transferase (360 aa).

10 helical membrane passes run arginine 25–isoleucine 45, threonine 73–leucine 93, tyrosine 97–tyrosine 117, tyrosine 134–threonine 154, valine 168–serine 188, glycine 199–serine 219, serine 236–phenylalanine 256, valine 263–isoleucine 283, isoleucine 288–valine 308, and valine 338–lysine 358.

This sequence belongs to the glycosyltransferase 4 family. MraY subfamily. Requires Mg(2+) as cofactor.

It is found in the cell inner membrane. The catalysed reaction is UDP-N-acetyl-alpha-D-muramoyl-L-alanyl-gamma-D-glutamyl-meso-2,6-diaminopimeloyl-D-alanyl-D-alanine + di-trans,octa-cis-undecaprenyl phosphate = di-trans,octa-cis-undecaprenyl diphospho-N-acetyl-alpha-D-muramoyl-L-alanyl-D-glutamyl-meso-2,6-diaminopimeloyl-D-alanyl-D-alanine + UMP. Its pathway is cell wall biogenesis; peptidoglycan biosynthesis. Catalyzes the initial step of the lipid cycle reactions in the biosynthesis of the cell wall peptidoglycan: transfers peptidoglycan precursor phospho-MurNAc-pentapeptide from UDP-MurNAc-pentapeptide onto the lipid carrier undecaprenyl phosphate, yielding undecaprenyl-pyrophosphoryl-MurNAc-pentapeptide, known as lipid I. In Pseudomonas putida (strain ATCC 700007 / DSM 6899 / JCM 31910 / BCRC 17059 / LMG 24140 / F1), this protein is Phospho-N-acetylmuramoyl-pentapeptide-transferase.